Reading from the N-terminus, the 339-residue chain is Nitrilase (339 aa).

The CN hydrolase domain maps to 7–277; that stretch reads YRVAAVQASP…EGITYADIDL (271 aa). The active-site Proton acceptor is the E47. The active-site Proton donor is K128. The active-site Nucleophile is C162.

Belongs to the carbon-nitrogen hydrolase superfamily. Nitrilase family.

It carries out the reaction a nitrile + 2 H2O = a carboxylate + NH4(+). The protein is Nitrilase (nit) of Bacillus sp. (strain OxB-1).